The sequence spans 631 residues: Transcription factor dibT (631 aa).

The zn(2)-C6 fungal-type DNA-binding region spans 11-38; it reads CWTCRLRRKRCDSVQPVCGSCQSLEITC. Low complexity predominate over residues 123–144; that stretch reads SLADSSASTPSTSSGRPTTLRS. Disordered regions lie at residues 123 to 148 and 469 to 488; these read SLADSSASTPSTSSGRPTTLRSSVDR and GLKDLDTSPPSPQPTKTSAG.

The protein localises to the nucleus. Functionally, transcription factor; part of the gene cluster that mediates the biosynthesis of pestalotiollide B which is part of dibenzodioxocinones, a novel class of inhibitors against cholesterol ester transfer protein (CEPT). Acts as the key transcription factor within the cluster and positively regulates the expression of the cluster genes and the subsequent production of dibenzodioxocinones such as pestalotiollide B, pestalotiollide C, 1',2'-dehydropenicillide, 3'-methoxy-1',2'-dehydropenicillide and 1',2'-epoxy-3',4'-didehydropenicillide. Required for the expression of most PKS genes outside of the dibenzodioxocinones cluster, (43 out of 48 defined PKS genes), and promotes pigmentation of the mycelium and conidia. This chain is Transcription factor dibT, found in Pestalotiopsis microspora.